The sequence spans 246 residues: Phosphonates import ATP-binding protein PhnC (246 aa).

Residues 2–246 (IKFENVSKIY…ILDEVYRKEA (245 aa)) form the ABC transporter domain. ATP is bound at residue 35 to 42 (GTSGAGKS).

This sequence belongs to the ABC transporter superfamily. Phosphonates importer (TC 3.A.1.9.1) family. The complex is composed of two ATP-binding proteins (PhnC), two transmembrane proteins (PhnE) and a solute-binding protein (PhnD).

It localises to the cell membrane. The enzyme catalyses phosphonate(out) + ATP + H2O = phosphonate(in) + ADP + phosphate + H(+). In terms of biological role, part of the ABC transporter complex PhnCDE involved in phosphonates import. Responsible for energy coupling to the transport system. This chain is Phosphonates import ATP-binding protein PhnC, found in Lactococcus lactis subsp. lactis (strain IL1403) (Streptococcus lactis).